We begin with the raw amino-acid sequence, 122 residues long: Large ribosomal subunit protein uL14 (122 aa).

The protein belongs to the universal ribosomal protein uL14 family. As to quaternary structure, part of the 50S ribosomal subunit. Forms a cluster with proteins L3 and L19. In the 70S ribosome, L14 and L19 interact and together make contacts with the 16S rRNA in bridges B5 and B8.

Functionally, binds to 23S rRNA. Forms part of two intersubunit bridges in the 70S ribosome. The protein is Large ribosomal subunit protein uL14 of Clostridium perfringens (strain ATCC 13124 / DSM 756 / JCM 1290 / NCIMB 6125 / NCTC 8237 / Type A).